We begin with the raw amino-acid sequence, 716 residues long: Ciliary WD repeat-containing protein ctxp80 (716 aa).

Residues 1 to 53 are disordered; sequence MGCGGSSGASDPSSEKINWNNAEIHDEFKQEQKKAGAKRKAFDKTTGKAVEKE. Residues 8–21 are compositionally biased toward polar residues; that stretch reads GASDPSSEKINWNN. Residues 23-53 are compositionally biased toward basic and acidic residues; that stretch reads EIHDEFKQEQKKAGAKRKAFDKTTGKAVEKE. 10 WD repeats span residues 167-208, 213-254, 257-297, 305-343, 345-382, 424-462, 529-568, 571-610, 639-678, and 683-715; these read YHTN…KKGR, KGGR…QVKK, SGPD…FKKK, GKPT…STYD, HGKG…AEKT, HSDG…STAL, DSGE…KLGT, AHNS…QDPS, TDGT…GATP, and GHSE…QWKK.

This sequence belongs to the WD repeat EMAP family.

This is Ciliary WD repeat-containing protein ctxp80 from Euplotoides octocarinatus (Freshwater ciliate).